Reading from the N-terminus, the 181-residue chain is Malignant T-cell-amplified sequence 1 (181 aa).

Residue T81 is modified to Phosphothreonine; by MAPK1 and MAPK3. The region spanning 92 to 171 is the PUA domain; it reads LPHQQVDKGA…IGIENIHYLN (80 aa). S118 is subject to Phosphoserine; by CDK1.

The protein belongs to the MCTS1 family. In terms of assembly, interacts (via PUA domain) with DENR; the complex regulates translation reinitiation. In terms of processing, phosphorylation is critical for stabilization and promotion of cell proliferation. Ubiquitous. Over-expressed in T-cell lymphoid cell lines and in non-Hodgkin lymphoma cell lines as well as in a subset of primary large B-cell lymphomas.

It is found in the cytoplasm. Its function is as follows. Translation regulator forming a complex with DENR to promote translation reinitiation. Translation reinitiation is the process where the small ribosomal subunit remains attached to the mRNA following termination of translation of a regulatory upstream ORF (uORF), and resume scanning on the same mRNA molecule to initiate translation of a downstream ORF, usually the main ORF (mORF). The MCTS1/DENR complex is pivotal to two linked mechanisms essential for translation reinitiation. Firstly, the dissociation of deacylated tRNAs from post-termination 40S ribosomal complexes during ribosome recycling. Secondly, the recruitment in an EIF2-independent manner of aminoacylated initiator tRNA to P site of 40S ribosomes for a new round of translation. This regulatory mechanism governs the translation of more than 150 genes which translation reinitiation is MCTS1/DENR complex-dependent. Consequently, modulates various unrelated biological processes including cell cycle regulation and DNA damage signaling and repair. Notably, it positively regulates interferon gamma immunity to mycobacteria by enhancing the translation of JAK2. The polypeptide is Malignant T-cell-amplified sequence 1 (MCTS1) (Homo sapiens (Human)).